A 258-amino-acid chain; its full sequence is MSKVAMVTGGAQGIGRGISEKLAADGFDIAVADLPQQEEQAAETIKLIEAADQKAVFVGLDVTDKANFDSAIDEAAEKLGGFDVLVNNAGIAQIKPLLEVTEEDLKQIYSVNVFSVFFGIQAASRKFDELGVKGKIINAASIAAIQGFPILSAYSTTKFAVRGLTQAAAQELAPKGHTVNAYAPGIVGTGMWEQIDAELSKINGKPIGENFKEYSSSIALGRPSVPEDVAGLVSFLASENSNYVTGQVMLVDGGMLYN.

Residues 12–14 (QGI), D33, Q37, 61–62 (DV), N88, Y154, K158, and 184–189 (PGIVGT) contribute to the NAD(+) site. The active-site Proton acceptor is Y154.

The protein belongs to the short-chain dehydrogenases/reductases (SDR) family. In terms of assembly, homotetramer.

The enzyme catalyses (S,S)-butane-2,3-diol + NAD(+) = (S)-acetoin + NADH + H(+). It carries out the reaction (S)-acetoin + NAD(+) = diacetyl + NADH + H(+). With respect to regulation, slightly activated by Ba(2+), Ca(2+), Mn(2+), Mg(2+), and Co(2+), while Hg(2+) and Cu(2+) cause marked inhibition of the activity. Ni(2+), Zn(2+) and Cd(2+) have no effect on the catalytic activity. Is also slightly inhibited by lactate, pyruvate, succinate, acetate and formate. Catalyzes the reversible reduction of (S)-acetoin to (S,S)-butane-2,3-diol (L-BD) in the presence of NADH. To a lesser extent, can also catalyze the irreversible reduction of diacetyl to (S)-acetoin. Cannot oxidize meso-BD, D-BD, 2-butanol, 1,2-propanediol, ethanol, acetol, 1,2-butanediol, 1,3-butanediol, n-butanol, and n-propanol. Cannot reduce (R)-acetoin, acetol, dihydroxyacetone and 2,4-pentanedione. The sequence is that of L-2,3-butanediol dehydrogenase from Corynebacterium glutamicum (Brevibacterium saccharolyticum).